The following is a 64-amino-acid chain: Conotoxin Pu3.4 (64 aa).

Residues 1–16 (LGVLLPICLLLFPLTA) form the signal peptide. Positions 17–49 (LPLDGDQPADRPAERMQDDFITEQHPLFDPVKR) are excised as a propeptide. 3 disulfide bridges follow: cysteine 50–cysteine 63, cysteine 51–cysteine 59, and cysteine 55–cysteine 62. Proline 61 is modified (4-hydroxyproline).

The protein belongs to the conotoxin M superfamily. Expressed by the venom duct.

The protein localises to the secreted. The sequence is that of Conotoxin Pu3.4 from Conus pulicarius (Flea-bitten cone).